The chain runs to 622 residues: MMSEKTQQRKLAGTKKKFTDYHQWNSAGVGTGATDTKKKKINHGANPETTTSGGCHSPEDKQQNRAQLKEENKASHQHQQALRRQLEAQDHTIRILMCQKTELETALHDSQDAARKFEEDSKDLAARLHHSWHFAGELQRALSAMSAEHERADKYIKELTKEREAMSLELFRNIITNKELKEKNAELQEKLRLVETEKSEIQLHIKELKRKLETDKIPLPQVQTNTLQEKMWRQEEELRDQEELRDQEKLRKHEEKMWRQEQRLRDQEKELREQEQQMQEQEEQMRKQEEQMRKQEEQMRKQEEQMRKQEEQMRKQEEQMRKQEEQMGKQEEQMGEQEEQMRKQEKQMLKQKEQMRKQEEQMWKQEEQIGEQEEQMRKQEEQMWKQEEQIGEQEEQMRKQEEQMWKQEEQMGEQMRKQEEQMGEQEEQIRKQEEQMGEQEEQMRKQEEQMGEQEEQMRKQEEQMGEQEEQMRKQEEQMGEQEEQMGEQEEQMRKQVERLQFKEERLWDEYEKMQEEEEKIRRQVEKRREKKERMGEQEKTQEERCSEPCLPPSKYPSDMSHPGSLEPAREAGKGYSHDNRTAQIMQLPPGMKNAQERPGLGSTSCIPFFYGGDKKKIKIISI.

3 disordered regions span residues 1 to 82 (MMSE…QQAL), 251 to 496 (RKHE…RKQV), and 511 to 580 (EKMQ…HDNR). Basic and acidic residues-rich tracts occupy residues 57-74 (SPED…ENKA), 251-275 (RKHE…REQE), 283-332 (EQMR…KQEE), 339-367 (EQMR…KQEE), 374-388 (EQMR…KQEE), and 395-420 (EQMR…KQEE). Residues 100–534 (KTELETALHD…EKRREKKERM (435 aa)) are a coiled coil. Residues 477 to 489 (QMGEQEEQMGEQE) show a composition bias toward acidic residues. Basic and acidic residues-rich tracts occupy residues 511 to 546 (EKMQ…ERCS) and 567 to 580 (PARE…HDNR).

It belongs to the GOLGA6 family.

The chain is Golgin subfamily A member 6-like protein 7 from Homo sapiens (Human).